A 223-amino-acid polypeptide reads, in one-letter code: Endonuclease NucS (223 aa).

It belongs to the NucS endonuclease family.

It localises to the cytoplasm. Functionally, cleaves both 3' and 5' ssDNA extremities of branched DNA structures. This is Endonuclease NucS from Mycobacterium sp. (strain JLS).